Reading from the N-terminus, the 124-residue chain is Small ribosomal subunit protein bS6 (124 aa).

The disordered stretch occupies residues 99-124 (PLPAPRIVPGSEPEPVQQQEAAAVEA). The span at 111-124 (PEPVQQQEAAAVEA) shows a compositional bias: low complexity.

This sequence belongs to the bacterial ribosomal protein bS6 family.

Its function is as follows. Binds together with bS18 to 16S ribosomal RNA. The chain is Small ribosomal subunit protein bS6 from Prochlorococcus marinus (strain MIT 9313).